The sequence spans 280 residues: Exfoliative toxin A (280 aa).

Residues 1-38 form the signal peptide; sequence MNNSKIISKVLLSLSLFTVGASAFVIQDELMQKNHAKA. Catalysis depends on charge relay system residues His110, Asp158, and Ser233.

The protein belongs to the peptidase S1B family. Requires Ca(2+) as cofactor.

Has serine protease-like properties and binds to the skin protein profilaggrin. Cleaves substrates after acidic residues. Exfoliative toxins cause impetigous diseases commonly referred as staphylococcal scalded skin syndrome (SSSS). The sequence is that of Exfoliative toxin A (eta) from Staphylococcus aureus.